The following is a 274-amino-acid chain: Prothoracicostatic peptide (274 aa).

The N-terminal stretch at 1 to 19 is a signal peptide; the sequence is MRWCLFALWVFGVATVVTA. The propeptide occupies 20–67; it reads AEEPHHDAAPQTDNEVDLTEDDKRAWSSLHSGWAKRAWQDMSSAWGKR. At Trp76 the chain carries Tryptophan amide. Positions 77–91 are excised as a propeptide; that stretch reads GKRGWQDLNSAWGKR. Tryptophan amide is present on Trp100. A propeptide spanning residues 101–136 is cleaved from the precursor; it reads GKRGWQDLNSAWGKRDDDEAMEKKSWQDLNSVWGKR. Position 145 is a tryptophan amide (Trp145). Positions 146–148 are excised as a propeptide; it reads GKR. Trp157 bears the Tryptophan amide mark. Residues 158–172 constitute a propeptide that is removed on maturation; that stretch reads GKRGWNDISSVWGKR. Trp181 carries the tryptophan amide modification. Residues 182–274 constitute a propeptide that is removed on maturation; it reads GKRAWQDMSS…NEHSATTNEA (93 aa).

It is found in the secreted. Its function is as follows. Inhibits ecdysteroid biosynthesis in the prothoracic gland of fifth instar larvae, with maximum inhibition during the spinning stage. When administered to day 8 fifth instar larvae it produces a significant delay in the commencement spinning behavior. The chain is Prothoracicostatic peptide from Bombyx mori (Silk moth).